The primary structure comprises 478 residues: Islet cell autoantigen 1 (478 aa).

An AH domain is found at 50–253 (ASDADLDAKL…TSHTMAAIHE (204 aa)). A compositionally biased stretch (basic and acidic residues) spans 306-317 (EHKDSSAYKTEE). Disordered stretches follow at residues 306-365 (EHKD…SGDK) and 398-422 (LKEP…GFLP).

In terms of tissue distribution, predominantly expressed in brain, pancreas and stomach mucosa. High expression also found in stomach muscle and testis.

The protein resides in the cytoplasm. It is found in the cytosol. The protein localises to the golgi apparatus membrane. It localises to the cytoplasmic vesicle. Its subcellular location is the secretory vesicle membrane. The protein resides in the secretory vesicle. It is found in the synaptic vesicle membrane. Its function is as follows. May play a role in neurotransmitter secretion. This Mus musculus (Mouse) protein is Islet cell autoantigen 1.